Consider the following 371-residue polypeptide: Zygote-specific protein 3 (371 aa).

Residues 1–24 form the signal peptide; sequence MLRSAGRVAAVALLALFALGCVSA. Residue asparagine 41 is glycosylated (N-linked (GlcNAc...) asparagine). 2 ANK repeats span residues 62–91 and 94–123; these read TRRL…LARV and GTTT…DPNA. 2 consecutive WW domains span residues 159–187 and 283–313; these read EPGA…WAVP and YATP…WELP.

Its subcellular location is the endoplasmic reticulum lumen. Functionally, may have a role in the remodeling of the endoplasmic reticulum upon zygote formation. The sequence is that of Zygote-specific protein 3 (ZYS3) from Chlamydomonas reinhardtii (Chlamydomonas smithii).